Here is a 200-residue protein sequence, read N- to C-terminus: Interleukin 17-like protein (200 aa).

Positions 1–26 (MGNFFLFAMTLVVCSVIVLLTGVADS) are cleaved as a signal peptide. N46 carries an N-linked (GlcNAc...) asparagine glycan. Disulfide bonds link C122–C175 and C127–C177. A glycan (N-linked (GlcNAc...) asparagine) is linked at N192.

The protein belongs to the IL-17 family. Expressed in several tissues including hemocytes, gills, mantle, adductor muscle, labial palps, digestive glands and heart with highest levels in gills and lowest levels in adductor muscle and heart.

The protein localises to the secreted. The protein is Interleukin 17-like protein of Magallana gigas (Pacific oyster).